Here is a 340-residue protein sequence, read N- to C-terminus: Peroxisomal adenine nucleotide transporter 1 (340 aa).

Solcar repeat units follow at residues 4-119 (ENAV…VRKH), 133-218 (FSTP…LREA), and 236-320 (LSPG…LTKM). Transmembrane regions (helical) follow at residues 6–26 (AVIG…LDLA), 96–116 (GSST…YTLV), 139–159 (LVLG…INVV), 190–210 (GFWA…ITYA), 242–262 (FVMG…LIIA), and 293–313 (WKGL…LFMF).

This sequence belongs to the mitochondrial carrier (TC 2.A.29) family.

The protein resides in the peroxisome membrane. In terms of biological role, adenine nucleotide transporter involved in the uniport of ATP and adenine nucleotide hetero-exchange transport between the cytosol and the peroxisomal lumen. This transport is accompanied by a proton transport from the peroxisomal lumen to the cytosol. Transport of ATP into the peroxisome is required for beta-oxidation of medium-chain fatty acids. This Eremothecium gossypii (strain ATCC 10895 / CBS 109.51 / FGSC 9923 / NRRL Y-1056) (Yeast) protein is Peroxisomal adenine nucleotide transporter 1 (ANT1).